The chain runs to 440 residues: MNKFRTFPQINTLIEDESLKSYPFYIKAFFCKKVVAKLKENFFQDEISKDKLLLEIKKEIKTFYRKDLQSVINASGVVIHTNLGRSVIHEELYEACKDIICNYSNVEFDLENGKRGSRYALVLEKLKMLFECEDALVVNNNAAAVFLVLNSLCYDKEVISSRGELVEIGGSFRVPEVIKAAGVKLCEVGTSNKTHLKDYEQAINENTALILKTHKSNFALMGFHSEVNIKDLHELAKEKELLSYYDLGSGWCENLNEKLIKNEPKIRKLVQECDILSFSGDKLFGSVQAGIILGKKELIEKLKQNQLLRMLRVDKLTLSFLNESLKAYLQKDYEKIITLKLLNDDLSFIEKKALRVQKELKFQTQLKKSKSLVGGGSMPDKSLDTYILTFQGDALKLQTRFRKENIIGRIENDEFVLDFRTIRENELQKLILTINQMENL.

Lys282 carries the post-translational modification N6-(pyridoxal phosphate)lysine.

Belongs to the SelA family. Requires pyridoxal 5'-phosphate as cofactor.

Its subcellular location is the cytoplasm. The catalysed reaction is L-seryl-tRNA(Sec) + selenophosphate + H(+) = L-selenocysteinyl-tRNA(Sec) + phosphate. It functions in the pathway aminoacyl-tRNA biosynthesis; selenocysteinyl-tRNA(Sec) biosynthesis; selenocysteinyl-tRNA(Sec) from L-seryl-tRNA(Sec) (bacterial route): step 1/1. Converts seryl-tRNA(Sec) to selenocysteinyl-tRNA(Sec) required for selenoprotein biosynthesis. The polypeptide is L-seryl-tRNA(Sec) selenium transferase (Campylobacter jejuni subsp. jejuni serotype O:2 (strain ATCC 700819 / NCTC 11168)).